The sequence spans 266 residues: 15-hydroxyprostaglandin dehydrogenase [NAD(+)] (266 aa).

NAD(+) contacts are provided by residues 12–20 (GAAQGIGKA), 36–37 (DW), 63–65 (CDV), and Asn91. Residues Ser138 and Gln148 each contribute to the substrate site. Tyr151 (proton acceptor) is an active-site residue. Residues 151–155 (YCASK) and 186–188 (VKT) each bind NAD(+).

This sequence belongs to the short-chain dehydrogenases/reductases (SDR) family. Homodimer.

It localises to the cytoplasm. The catalysed reaction is prostaglandin E2 + NAD(+) = 15-oxoprostaglandin E2 + NADH + H(+). The enzyme catalyses (15S)-hydroxy-(5Z,8Z,11Z,13E)-eicosatetraenoate + NAD(+) = 15-oxo-(5Z,8Z,11Z,13E)-eicosatetraenoate + NADH + H(+). It catalyses the reaction (11R)-hydroxy-(5Z,8Z,12E,14Z)-eicosatetraenoate + NAD(+) = 11-oxo-(5Z,8Z,12E,14Z)-eicosatetraenoate + NADH + H(+). It carries out the reaction lipoxin A4 + NAD(+) = 15-oxo-(5S,6R)-dihydroxy-(7E,9E,11Z,13E)-eicosatetraenoate + NADH + H(+). The catalysed reaction is 15-oxo-(5S,6R)-dihydroxy-(7E,9E,11Z)-eicosatrienoate + NADH + H(+) = (5S,6R,15S)-trihydroxy-(7E,9E,11Z)-eicosatrienoate + NAD(+). The enzyme catalyses prostaglandin A1 + NAD(+) = 15-oxo-prostaglandin A1 + NADH + H(+). It catalyses the reaction prostaglandin E1 + NAD(+) = 15-oxoprostaglandin E1 + NADH + H(+). It carries out the reaction 14-hydroxy-(4Z,7Z,10Z,12E,16Z,19Z)-docosahexaenoate + NAD(+) = 14-oxo-(4Z,7Z,10Z,12E,16Z,19Z)-docosahexaenoate + NADH + H(+). The catalysed reaction is resolvin E1 + NAD(+) = 18-oxo-resolvin E1 + NADH + H(+). The enzyme catalyses resolvin D1 + NAD(+) = 8-oxoresolvin D1 + NADH + H(+). It catalyses the reaction resolvin D1 + NAD(+) = 17-oxoresolvin D1 + NADH + H(+). It carries out the reaction resolvin D2 + NAD(+) = 7-oxoresolvin D2 + NADH + H(+). The catalysed reaction is resolvin D2 + NAD(+) = 16-oxoresolvin D2 + NADH + H(+). Functionally, catalyzes the NAD-dependent dehydrogenation (oxidation) of a broad array of hydroxylated polyunsaturated fatty acids (mainly eicosanoids and docosanoids, including prostaglandins, lipoxins and resolvins), yielding their corresponding keto (oxo) metabolites. Decreases the levels of the pro-proliferative prostaglandins such as prostaglandin E2 (whose activity is increased in cancer because of an increase in the expression of cyclooxygenase 2) and generates oxo-fatty acid products that can profoundly influence cell function by abrogating pro-inflammatory cytokine expression. Converts resolvins E1, D1 and D2 to their oxo products, which represents a mode of resolvin inactivation. Resolvin E1 plays important roles during the resolution phase of acute inflammation, while resolvins D1 and D2 have a unique role in obesity-induced adipose inflammation. The protein is 15-hydroxyprostaglandin dehydrogenase [NAD(+)] (Hpgd) of Rattus norvegicus (Rat).